The primary structure comprises 155 residues: Egg-lysin (155 aa).

Residues M1–S18 form the signal peptide.

In terms of assembly, monomer. Homodimer. Molecules associate into dimers and then rapidly dissociate again. Interacts (as a monomer) with the egg vitelline layer protein VERL (via VERL repeats); each VERL chain can bind multiple copies of lysin. As to expression, sperm (at protein level).

The protein localises to the cytoplasmic vesicle. Its subcellular location is the secretory vesicle. It is found in the acrosome lumen. In terms of biological role, creates a 3 um hole in the egg vitelline layer through which the sperm passes. Does not have enzyme activity. Species-specific interaction between the sperm protein lysin and the egg protein VERL exposes a basic surface on lysin that may dissociate the egg vitelline layer via electrostatic repulsion. Plays a role in ensuring species-specific fertilization. In Haliotis corrugata (Pink abalone), this protein is Egg-lysin.